A 288-amino-acid chain; its full sequence is Aquaporin PIP2-4 (288 aa).

Residues 1–24 (MAKDIEASGPEAGEFSAKDYTDPP) are disordered. The next 2 helical transmembrane spans lie at 42–62 (AVIAEFIATLLFLYITVATVI) and 79–99 (CGGVGILGIAWAFGGMIFILV). The NPA 1 motif lies at 111–113 (NPA). Transmembrane regions (helical) follow at residues 130–150 (LLYIIAQCLGAICGVGLVKGF), 172–192 (GTGLAAEIIGTFVLVYTVFSA), and 206–226 (VLAPLPIGFAVFMVHLATIPI). The NPA 2 motif lies at 232–234 (NPA). The helical transmembrane segment at 254–274 (IFWVGPLIGAAIAAAYHQYVL) threads the bilayer.

Belongs to the MIP/aquaporin (TC 1.A.8) family. PIP (TC 1.A.8.11) subfamily. In terms of assembly, homomers. May interact with PIP1-2 to form heteromers. Expressed in the root growing zone at 5-6 mm from the root tip.

Its subcellular location is the cell membrane. Its function is as follows. Water channel required to facilitate the transport of water across cell membrane. Active as homomers. Increased activity when heteromerization with PIP1-2. In Zea mays (Maize), this protein is Aquaporin PIP2-4 (PIP2-4).